Here is a 72-residue protein sequence, read N- to C-terminus: Rubredoxin in uptake hydrogenase operon (72 aa).

The Rubredoxin-like domain maps to 19-70; sequence DAVLECKICWHRYDPAVGDEVWQILAGTPFAALPAHWRCPQCDGDREQFMVV. Positions 24, 27, 57, and 60 each coordinate Fe cation.

Belongs to the rubredoxin family. Fe(3+) is required as a cofactor.

Functionally, could be an electron transport intermediate in hydrogen oxidation. This is Rubredoxin in uptake hydrogenase operon (hupR) from Azotobacter chroococcum mcd 1.